The chain runs to 485 residues: Ribulose bisphosphate carboxylase large chain (485 aa).

Positions 1-2 are excised as a propeptide; the sequence is MS. P3 is modified (N-acetylproline). K14 carries the post-translational modification N6,N6,N6-trimethyllysine. Residues N123 and T173 each contribute to the substrate site. Residue K175 is the Proton acceptor of the active site. Residue K177 coordinates substrate. Residues K201, D203, and E204 each coordinate Mg(2+). At K201 the chain carries N6-carboxylysine. The active-site Proton acceptor is H294. 3 residues coordinate substrate: R295, H327, and S379.

This sequence belongs to the RuBisCO large chain family. Type I subfamily. Heterohexadecamer of 8 large chains and 8 small chains; disulfide-linked. The disulfide link is formed within the large subunit homodimers. The cofactor is Mg(2+). Post-translationally, the disulfide bond which can form in the large chain dimeric partners within the hexadecamer appears to be associated with oxidative stress and protein turnover.

It localises to the plastid. Its subcellular location is the chloroplast. It carries out the reaction 2 (2R)-3-phosphoglycerate + 2 H(+) = D-ribulose 1,5-bisphosphate + CO2 + H2O. It catalyses the reaction D-ribulose 1,5-bisphosphate + O2 = 2-phosphoglycolate + (2R)-3-phosphoglycerate + 2 H(+). Its function is as follows. RuBisCO catalyzes two reactions: the carboxylation of D-ribulose 1,5-bisphosphate, the primary event in carbon dioxide fixation, as well as the oxidative fragmentation of the pentose substrate in the photorespiration process. Both reactions occur simultaneously and in competition at the same active site. This Helianthus annuus (Common sunflower) protein is Ribulose bisphosphate carboxylase large chain.